Consider the following 469-residue polypeptide: SWI/SNF complex subunit SWI3B (469 aa).

Residues Met1–Ser42 form a disordered region. Low complexity predominate over residues Leu15–Ser42. In terms of domain architecture, SWIRM spans Ile48 to Leu145. The 52-residue stretch at Glu223–Gln274 folds into the SANT domain. Composition is skewed to basic and acidic residues over residues Asp293–Gly306 and Asp360–Arg369. 2 disordered regions span residues Asp293–Lys314 and Asp360–Arg387. A compositionally biased stretch (polar residues) spans Gln370–Thr380. The stretch at Val423–Phe447 forms a coiled coil.

In terms of assembly, homodimers and heterodimers. Interacts with SWI3A, SWI3C, SWI3D, BSH, BRM and FCA (via C-terminus), and (via N-terminus) with HAB1. Interacts with MORC6 and SUVH9. Expressed in roots, stems, leaves, flowers and siliques.

Its subcellular location is the nucleus. In terms of biological role, component of a multiprotein complex equivalent of the SWI/SNF complex, an ATP-dependent chromatin-remodeling complex, which is required for the positive and negative regulation of gene expression of a large number of genes. It changes chromatin structure by altering DNA-histone contacts within a nucleosome, leading eventually to a change in nucleosome position, thus facilitating or repressing binding of gene-specific transcription factors. May play an essential role in the transition from the vegetative to the reproductive phase of development. May be a positive regulator of ABA signaling. This chain is SWI/SNF complex subunit SWI3B (SWI3B), found in Arabidopsis thaliana (Mouse-ear cress).